Here is a 198-residue protein sequence, read N- to C-terminus: Probable nicotinate-nucleotide adenylyltransferase (198 aa).

Belongs to the NadD family.

It carries out the reaction nicotinate beta-D-ribonucleotide + ATP + H(+) = deamido-NAD(+) + diphosphate. It functions in the pathway cofactor biosynthesis; NAD(+) biosynthesis; deamido-NAD(+) from nicotinate D-ribonucleotide: step 1/1. Its function is as follows. Catalyzes the reversible adenylation of nicotinate mononucleotide (NaMN) to nicotinic acid adenine dinucleotide (NaAD). The chain is Probable nicotinate-nucleotide adenylyltransferase from Chlorobium phaeobacteroides (strain BS1).